The sequence spans 244 residues: Mitophagy receptor atg43 (244 aa).

Positions 1 to 24 (MSSESKGIPIPRSDSNKTSDVSSW) are disordered. The Cytoplasmic portion of the chain corresponds to 1-198 (MSSESKGIPI…LVALITLRDH (198 aa)). The short motif at 28–31 (YELI) is the atg8 interacting motif (AIM) element. A disordered region spans residues 105 to 131 (SLSLLQSKEEDDSSNWETEDSESAVEE). Positions 113 to 131 (EEDDSSNWETEDSESAVEE) are enriched in acidic residues. The involved in MIM complex binding. Required for normal vegetative cell population growth but is dispensable for mitophagy stretch occupies residues 165-184 (PPIPDLRFQQSYLQSIQRAN). The chain crosses the membrane as a helical span at residues 199–215 (VLYPFLSGGMWVFVRHI). Residues 216–244 (FQFLKLQEKGFHFGQSLRRNLGLFSTFKD) are Mitochondrial intermembrane-facing.

Interacts (via N-terminal atg8 interacting motif) with atg8; the interaction is direct. Interacts with the mitochondrial outer import machinery (MIM) complex subunits mim1 and mim2.

It localises to the mitochondrion outer membrane. Mitophagy receptor that tethers atg8 to the mitochondrial outer membrane to promote selective autophagy. The protein is Mitophagy receptor atg43 of Schizosaccharomyces pombe (strain 972 / ATCC 24843) (Fission yeast).